The following is a 133-amino-acid chain: Antifungal protein ginkbilobin-like protein 2 (133 aa).

An N-terminal signal peptide occupies residues 1-24; the sequence is MSMGSFGFALAVMVLAVLVASAAG. Positions 28 to 133 constitute a Gnk2-homologous domain; the sequence is TNLVSSACNG…CFIRYEQYSI (106 aa). Asn36 lines the alpha-D-mannopyranose pocket. 2 cysteine pairs are disulfide-bonded: Cys87/Cys96 and Cys99/Cys124. Alpha-D-mannopyranose contacts are provided by Arg118 and Glu129.

In terms of biological role, exerts antifungal activity through its carbohydrate-binding specificity. The chain is Antifungal protein ginkbilobin-like protein 2 from Picea glauca (White spruce).